The chain runs to 344 residues: MGCNPPYLLPYRLRLLLFFTLCLTVVGWVTSNYFVDPIQVIPKAKVFMASFYKVIPLGKEETLVHDATMEKVELGNCPSVSPNLRGQSKLIFEPDLTLEEVQAKNPKVSGGRYHPEECKAVQRVAVLIPHRNREKHLTYLLEHLHPFLQRQQLDYGIYIIHQTGSKKFNRAKLLNVGYLEALKEQNWDCFIFHDVDLVPENDFNLYTCGDQPKHLVVGRNSTGYRLRYSKYFGGVTALSREQFFKVNGFSNNYWGWGGEDDDLRLRVELHKMKISRPNPDVGKYTMIFHTRDKGNEVNVDRMKLLHQMSRVWKTDGLSSCSYRLLSVEHNPLYTNITVDFWTGV.

Topologically, residues 1–12 are cytoplasmic; that stretch reads MGCNPPYLLPYR. The helical; Signal-anchor for type II membrane protein transmembrane segment at 13–38 threads the bilayer; it reads LRLLLFFTLCLTVVGWVTSNYFVDPI. The Lumenal segment spans residues 39-344; the sequence is QVIPKAKVFM…NITVDFWTGV (306 aa). Cys-77 and Cys-118 are joined by a disulfide. UDP-alpha-D-galactose-binding positions include 129 to 133, 168 to 170, and 195 to 196; these read PHRNR, FNR, and VD. Residues Cys-189 and Cys-208 are joined by a disulfide bond. Residue Asp-196 participates in Mn(2+) binding. Asn-220 carries N-linked (GlcNAc...) asparagine glycosylation. Residues Tyr-224 and Trp-256 each contribute to the UDP-alpha-D-galactose site. 258–261 lines the N-acetyl-D-glucosamine pocket; it reads GEDD. His-289 is a Mn(2+) binding site. 289–291 is a binding site for UDP-alpha-D-galactose; it reads HTR. Arg-301 contributes to the N-acetyl-D-glucosamine binding site. A glycan (N-linked (GlcNAc...) asparagine) is linked at Asn-335.

This sequence belongs to the glycosyltransferase 7 family. Mn(2+) is required as a cofactor.

It is found in the golgi apparatus. It localises to the golgi stack membrane. The enzyme catalyses N-acetyl-D-glucosamine + UDP-alpha-D-galactose = beta-D-galactosyl-(1-&gt;4)-N-acetyl-D-glucosamine + UDP + H(+). It carries out the reaction a beta-D-GlcNAc-(1-&gt;3)-beta-D-Gal-(1-&gt;4)-beta-D-Glc-(1&lt;-&gt;1)-Cer(d18:1(4E)) + UDP-alpha-D-galactose = a neolactoside nLc4Cer(d18:1(4E)) + UDP + H(+). It participates in protein modification; protein glycosylation. Galactose (Gal) transferase involved in the biosynthesis of glycoproteins, proteoglycans, and glycosyphingolipids. Catalyzes the transfer of Gal residue via a beta1-&gt;4 linkage from UDP-Gal to the non-reducing terminal N-acetyl glucosamine 6-O-sulfate (6-O-sulfoGlcNAc) in the linearly growing chain of both N- and O-linked keratan sulfate proteoglycans. Cooperates with B3GNT7 N-acetyl glucosamine transferase and CHST6 and CHST1 sulfotransferases to construct and elongate mono- and disulfated disaccharide units [-&gt;3Galbeta1-&gt;4(6-sulfoGlcNAcbeta)1-&gt;] and [-&gt;3(6-sulfoGalbeta)1-&gt;4(6-sulfoGlcNAcbeta)1-&gt;] within keratan sulfate polymer. The protein is Beta-1,4-galactosyltransferase 4 (B4GALT4) of Cricetulus griseus (Chinese hamster).